The sequence spans 461 residues: Probable metabolite transport protein CsbC (461 aa).

Residues 1-14 (MKKDTRKYMIYFFG) are Cytoplasmic-facing. The chain crosses the membrane as a helical span at residues 15–35 (ALGGLLYGYDTGVISGALLFI). The Extracellular segment spans residues 36 to 38 (NND). The helical transmembrane segment at 39 to 59 (IPLTTLTEGLVVSMLLLGAIF) threads the bilayer. Topologically, residues 60 to 76 (GSALSGTCSDRWGRRKV) are cytoplasmic. The chain crosses the membrane as a helical span at residues 77-97 (VFVLSIIFIIGALACAFSQTI). Topologically, residues 98 to 104 (GMLIASR) are extracellular. A helical transmembrane segment spans residues 105-125 (VILGLAVGGSTALVPVYLSEM). At 126 to 139 (APTKIRGTLGTMNN) the chain is on the cytoplasmic side. The chain crosses the membrane as a helical span at residues 140–160 (LMIVTGILLAYIVNYLFTPFE). Topologically, residues 161–163 (AWR) are extracellular. Residues 164–184 (WMVGLAAVPAVLLLIGIAFMP) traverse the membrane as a helical segment. The Cytoplasmic segment spans residues 185–241 (ESPRWLVKRGSEEEARRIMNITHDPKDIEMELAEMKQGEAEKKETTLGVLKAKWIRP). A helical transmembrane segment spans residues 242 to 262 (MLLIGVGLAIFQQAVGINTVI). The Extracellular segment spans residues 263 to 280 (YYAPTIFTKAGLGTSASA). The helical transmembrane segment at 281 to 301 (LGTMGIGILNVIMCITAMILI) threads the bilayer. Topologically, residues 302-308 (DRVGRKK) are cytoplasmic. The helical transmembrane segment at 309-329 (LLIWGSVGITLSLAALSGVLL) threads the bilayer. Over 330 to 341 (TLGLSASTAWMT) the chain is Extracellular. The helical transmembrane segment at 342–362 (VVFLGVYIVFYQATWGPVVWV) threads the bilayer. The Cytoplasmic portion of the chain corresponds to 363 to 378 (LMPELFPSKARGAATG). Residues 379-399 (FTTLVLSAANLIVSLVFPLML) traverse the membrane as a helical segment. Over 400–402 (SAM) the chain is Extracellular. The chain crosses the membrane as a helical span at residues 403–423 (GIAWVFMVFSVICLLSFFFAF). Over 424-461 (YMVPETKGKSLEEIEASLKKRFKKKKSTQNQVLNERTL) the chain is Cytoplasmic.

It belongs to the major facilitator superfamily. Sugar transporter (TC 2.A.1.1) family.

The protein localises to the cell membrane. In terms of biological role, could serve either a nutritional or an osmotic protection function. This Bacillus subtilis (strain 168) protein is Probable metabolite transport protein CsbC (csbC).